The sequence spans 129 residues: Follitropin subunit beta (129 aa).

A signal peptide spans 1 to 20 (MKSVQLCFLFCCWRAICCKS). Disulfide bonds link C21-C69, C35-C84, C38-C122, C46-C100, C50-C102, and C105-C112. N-linked (GlcNAc...) asparagine glycans are attached at residues N25 and N42.

Belongs to the glycoprotein hormones subunit beta family. As to quaternary structure, heterodimer. The active follitropin is a heterodimer composed of an alpha chain/CGA shared with other hormones and a unique beta chain/FSHB shown here.

Its subcellular location is the secreted. In terms of biological role, together with the alpha chain CGA constitutes follitropin, the follicle-stimulating hormone, and provides its biological specificity to the hormone heterodimer. Binds FSHR, a G protein-coupled receptor, on target cells to activate downstream signaling pathways. Follitropin is involved in follicle development and spermatogenesis in reproductive organs. This is Follitropin subunit beta (FSHB) from Ailuropoda melanoleuca (Giant panda).